The primary structure comprises 122 residues: Small ribosomal subunit protein uS13c (122 aa).

Residues R102–K122 form a disordered region.

It belongs to the universal ribosomal protein uS13 family. As to quaternary structure, part of the 30S ribosomal subunit.

It is found in the plastid. The protein localises to the chloroplast. In terms of biological role, located at the top of the head of the 30S subunit, it contacts several helices of the 16S rRNA. This is Small ribosomal subunit protein uS13c from Guillardia theta (Cryptophyte).